The following is a 420-amino-acid chain: Serine hydroxymethyltransferase (420 aa).

Residues Leu117 and 121–123 (GHL) each bind (6S)-5,6,7,8-tetrahydrofolate. Lys226 carries the post-translational modification N6-(pyridoxal phosphate)lysine.

It belongs to the SHMT family. Homodimer. The cofactor is pyridoxal 5'-phosphate.

The protein resides in the cytoplasm. The enzyme catalyses (6R)-5,10-methylene-5,6,7,8-tetrahydrofolate + glycine + H2O = (6S)-5,6,7,8-tetrahydrofolate + L-serine. The protein operates within one-carbon metabolism; tetrahydrofolate interconversion. It participates in amino-acid biosynthesis; glycine biosynthesis; glycine from L-serine: step 1/1. Functionally, catalyzes the reversible interconversion of serine and glycine with tetrahydrofolate (THF) serving as the one-carbon carrier. This reaction serves as the major source of one-carbon groups required for the biosynthesis of purines, thymidylate, methionine, and other important biomolecules. Also exhibits THF-independent aldolase activity toward beta-hydroxyamino acids, producing glycine and aldehydes, via a retro-aldol mechanism. The protein is Serine hydroxymethyltransferase of Rhodopirellula baltica (strain DSM 10527 / NCIMB 13988 / SH1).